We begin with the raw amino-acid sequence, 732 residues long: Polyadenylate-binding protein, cytoplasmic and nuclear (732 aa).

Residues 1–19 (MSAETSTTPAPAENTNGTP) show a composition bias toward polar residues. The interval 1–26 (MSAETSTTPAPAENTNGTPDNAPAPE) is disordered. 4 consecutive RRM domains span residues 42–120 (ASLY…WSQR), 130–207 (GNVF…HHIS), 223–300 (TNIY…RAQK), and 326–454 (VNLY…LAQR). Disordered stretches follow at residues 357–413 (VMRD…KKPL) and 706–732 (MKNKSDEPAAEKPKEAAQEAPAEENKA). Positions 371–412 (SETKESANKENEKAAEGEKEPAAEEKEKEEKKEAEQKPEKKP) are enriched in basic and acidic residues. One can recognise a PABC domain in the interval 630 to 707 (VGVLTAQALS…ALSVYDEYMK (78 aa)).

Belongs to the polyadenylate-binding protein type-1 family.

The protein localises to the cytoplasm. The protein resides in the nucleus. In terms of biological role, binds the poly(A) tail of mRNA. Appears to be an important mediator of the multiple roles of the poly(A) tail in mRNA biogenesis, stability and translation. In the nucleus, involved in both mRNA cleavage and polyadenylation. Is also required for efficient mRNA export to the cytoplasm. Acts in concert with a poly(A)-specific nuclease (PAN) to affect poly(A) tail shortening, which may occur concomitantly with either nucleocytoplasmic mRNA transport or translational initiation. In the cytoplasm, stimulates translation initiation and regulates mRNA decay through translation termination-coupled poly(A) shortening, probably mediated by PAN. The polypeptide is Polyadenylate-binding protein, cytoplasmic and nuclear (pab1) (Emericella nidulans (strain FGSC A4 / ATCC 38163 / CBS 112.46 / NRRL 194 / M139) (Aspergillus nidulans)).